Consider the following 546-residue polypeptide: U3 small nucleolar RNA-associated protein 18 homolog (546 aa).

Disordered regions lie at residues 1–55, 94–118, and 177–205; these read MSLS…LEES, SAVR…EENG, and NPGT…DGGV. Positions 13–23 are enriched in basic and acidic residues; the sequence is IKREELKKQYE. The segment covering 24–35 has biased composition (acidic residues); the sequence is DVEDEEEIGSDD. Ser33 carries the phosphoserine modification. Over residues 45–55 the composition is skewed to basic and acidic residues; the sequence is TEKEKQKLEES. Acidic residues-rich tracts occupy residues 101-117 and 193-205; these read DYED…DEEN and ESSD…DGGV. WD repeat units follow at residues 242–281, 372–411, 413–454, and 509–545; these read PSNG…NTKI, KMNG…CLYK, VDEG…GGKR, and STMH…HYQN. The DWD box motif lies at 389-404; it reads LLSSGGDGQVYVWDLR.

It belongs to the WD repeat UTP18 family.

The protein resides in the nucleus. It is found in the nucleolus. In terms of biological role, involved in nucleolar processing of pre-18S ribosomal RNA. This chain is U3 small nucleolar RNA-associated protein 18 homolog, found in Arabidopsis thaliana (Mouse-ear cress).